A 382-amino-acid polypeptide reads, in one-letter code: Phosphatidylglycerol--prolipoprotein diacylglyceryl transferase (382 aa).

3 helical membrane-spanning segments follow: residues 18–38 (IQWYGIIVSIGIIFAILMFVF), 53–73 (FFIFIAVLTMVLGARLWSFVI), and 91–111 (LAIQGGILLTSIVGVIYFNFF). Arg-162 contacts a 1,2-diacyl-sn-glycero-3-phospho-(1'-sn-glycerol). The next 4 membrane-spanning stretches (helical) occupy residues 213-233 (IPLFLIESFFNTIFFVLIYFV), 243-263 (GTIGFSYFLATGIIRLILENF), 274-294 (ITTSILFIVVGILGIFYCQFI), and 302-322 (FWTYFFLYAFYKVAAFFTTLF).

This sequence belongs to the Lgt family.

The protein localises to the cell membrane. It carries out the reaction L-cysteinyl-[prolipoprotein] + a 1,2-diacyl-sn-glycero-3-phospho-(1'-sn-glycerol) = an S-1,2-diacyl-sn-glyceryl-L-cysteinyl-[prolipoprotein] + sn-glycerol 1-phosphate + H(+). It functions in the pathway protein modification; lipoprotein biosynthesis (diacylglyceryl transfer). In terms of biological role, catalyzes the transfer of the diacylglyceryl group from phosphatidylglycerol to the sulfhydryl group of the N-terminal cysteine of a prolipoprotein, the first step in the formation of mature lipoproteins. This Mycoplasma genitalium (strain ATCC 33530 / DSM 19775 / NCTC 10195 / G37) (Mycoplasmoides genitalium) protein is Phosphatidylglycerol--prolipoprotein diacylglyceryl transferase.